The primary structure comprises 184 residues: MYTMAQIKTDKILGSRRISNYFWATIILLGGLSFFLVGLSSYLKIELLPFTKSTDLLFLPQGIIMTFYGTAAILISLFLWLTIIWNIGSGYNEFNRDIGLVTIYRLGFPGKNRLIKLRYKIHDIYSIKVQIQEGLTPKREIYLKTKDKREIPLTQVGQPMSLAQIEERAAFLAKFLGVILEGIR.

Transmembrane regions (helical) follow at residues 21-41 (YFWA…GLSS) and 63-83 (IIMT…WLTI).

It belongs to the Ycf4 family.

The protein localises to the plastid. It localises to the chloroplast thylakoid membrane. Seems to be required for the assembly of the photosystem I complex. The protein is Photosystem I assembly protein Ycf4 of Gracilaria tenuistipitata var. liui (Red alga).